Here is a 2193-residue protein sequence, read N- to C-terminus: Highly reducing polyketide synthase VdtX (2193 aa).

Positions M1–S417 constitute a Ketosynthase family 3 (KS3) domain. Active-site for beta-ketoacyl synthase activity residues include C170, H306, and H340. The interval V513–F809 is malonyl-CoA:ACP transacylase (MAT) domain. Residues H877–R1001 form an N-terminal hotdog fold region. The segment at H877–N1128 is dehydratase (DH) domain. One can recognise a PKS/mFAS DH domain in the interval H877–E1202. H909 functions as the Proton acceptor; for dehydratase activity in the catalytic mechanism. Residues S1032–E1202 are C-terminal hotdog fold. D1093 serves as the catalytic Proton donor; for dehydratase activity. Residues N1256–A1390 form a methyltransferase (CMet) domain region. The enoyl reductase (ER) domain stretch occupies residues G1575–L1783. Residues A1807 to Q1981 are ketoreductase (KR) domain. In terms of domain architecture, Carrier spans P2102–L2183. Position 2143 is an O-(pantetheine 4'-phosphoryl)serine (S2143).

Highly reducing polyketide synthase; part of the gene cluster that mediates the biosynthesis of viriditoxin, one of the 'classical' secondary metabolites produced by fungi and that has antibacterial activity. The first step is performed by the polyketide synthase VdtA which condenses one acetyl-CoA and 6 malonyl-CoA units to form the heptaketide monomer backbone of viriditoxin. The product of VdtA is then O-methylated on C7 by the O-methyltransferase VdtC. The O-methyl group is important for the stereoselective coupling of the monomers at the final step of viriditoxin biosynthesis. The short-chain dehydrogenase/reductase VdtF is involved in the reduction of the C3-C4 double bond. The FAD-binding monooxygenase VdtE then converts the ketone group into a methyl-ester group to yield semi-viriditoxin. Finally, the laccase VdtB is involved in dimerization of 2 semi-viriditoxin molecules to yield the final viriditoxin. The non-catalytic carboxylesterase-like protein VdtD affects the stereochemistical outcome of the coupling. The highly reducing polyketide synthase VdtX is not involved in viriditoxin synthesis, but might possibly play a role in the production of additional metabolites not identified yet. In Byssochlamys spectabilis (Paecilomyces variotii), this protein is Highly reducing polyketide synthase VdtX.